Reading from the N-terminus, the 567-residue chain is Periplasmic [NiFe] hydrogenase large subunit (567 aa).

Glutamate 62 is a binding site for Mg(2+). Residues cysteine 81 and cysteine 84 each coordinate Ni(2+). Cysteine 84 provides a ligand contact to Fe cation. Residue leucine 498 coordinates Mg(2+). 2 residues coordinate Ni(2+): cysteine 546 and cysteine 549. Residue cysteine 549 coordinates Fe cation. Residue histidine 552 participates in Mg(2+) binding. The propeptide occupies 553 to 567 (VIDGHTNEVHKFRIL).

It belongs to the [NiFe]/[NiFeSe] hydrogenase large subunit family. In terms of assembly, heterodimer of a large and a small subunit. Requires Ni(2+) as cofactor. Fe cation serves as cofactor.

The protein resides in the periplasm. It carries out the reaction 2 Fe(III)-[cytochrome c3] + H2 = 2 Fe(II)-[cytochrome c3] + 2 H(+). Catalyzes the reversible oxidoreduction of molecular hydrogen, in conjunction with a specific electron acceptor, cytochrome c3. The chain is Periplasmic [NiFe] hydrogenase large subunit (hydB) from Nitratidesulfovibrio vulgaris (strain DSM 19637 / Miyazaki F) (Desulfovibrio vulgaris).